A 392-amino-acid chain; its full sequence is uncharacterized protein (392 aa).

The protein belongs to the mimivirus L17x/L18x family.

This is an uncharacterized protein from Acanthamoeba polyphaga (Amoeba).